We begin with the raw amino-acid sequence, 284 residues long: Elongation factor Ts (284 aa).

The interval 80–83 (TDFV) is involved in Mg(2+) ion dislocation from EF-Tu.

The protein belongs to the EF-Ts family.

Its subcellular location is the cytoplasm. In terms of biological role, associates with the EF-Tu.GDP complex and induces the exchange of GDP to GTP. It remains bound to the aminoacyl-tRNA.EF-Tu.GTP complex up to the GTP hydrolysis stage on the ribosome. The polypeptide is Elongation factor Ts (Neisseria meningitidis serogroup A / serotype 4A (strain DSM 15465 / Z2491)).